A 548-amino-acid polypeptide reads, in one-letter code: MKKVTAMLFSMAVGLNAVSMAAKAKASEEQETDVLLIGGGIMSATLGTYLRELEPEWSMTMVERLEGVAQESSNGWNNAGTGHSALMELNYTPQNADGSISIEKAVAINEAFQISRQFWAHQVERGVLRTPRSFINTVPHMSFVWGEDNVNFLRARYAALQQSSLFRGMRYSEDHAQIKEWAPLVMEGRDPQQKVAATRTEIGTDVNYGEITRQLIASLQKKSNFSLQLSSEVRALKRNDDNTWTVTVADLKNGTAQNIRAKFVFIGAGGAALKLLQESGIPEAKDYAGFPVGGQFLVSENPDVVNHHLAKVYGKASVGAPPMSVPHIDTRVLDGKRVVLFGPFATFSTKFLKNGSLWDLMSSTTTSNVMPMMHVGLDNFDLVKYLVSQVMLSEEDRFEALKEYYPQAKKEDWRLWQAGQRVQIIKRDADKGGVLRLGTEVVSDQQGTIAALLGASPGASTAAPIMLNLLEKVFGDRVSSPQWQATLKAIVPSYGRKLNGDVAATERELQYTSEVLGLKYDKPQAADSTPKPQLKPQPVQKEVADIAL.

The disordered stretch occupies residues 521–548 (DKPQAADSTPKPQLKPQPVQKEVADIAL). Positions 530–541 (PKPQLKPQPVQK) are enriched in low complexity.

This sequence belongs to the MQO family. FAD is required as a cofactor.

The enzyme catalyses (S)-malate + a quinone = a quinol + oxaloacetate. It participates in carbohydrate metabolism; tricarboxylic acid cycle; oxaloacetate from (S)-malate (quinone route): step 1/1. In Escherichia coli (strain UTI89 / UPEC), this protein is Probable malate:quinone oxidoreductase.